The primary structure comprises 248 residues: Probable transcriptional regulatory protein BT_2363 (248 aa).

It belongs to the TACO1 family.

It localises to the cytoplasm. The protein is Probable transcriptional regulatory protein BT_2363 of Bartonella tribocorum (strain CIP 105476 / IBS 506).